Here is an 871-residue protein sequence, read N- to C-terminus: CRISPR system Cmr subunit Cmr2 (871 aa).

Positions 1-215 are not required for target RNA cleavage; that stretch reads MVNIKEKLFV…THLDLTSALS (215 aa). Mn(2+) contacts are provided by His13, Asp14, and His25. Zn(2+) is bound by residues Cys448, Cys451, Cys478, and Cys481. Residues 592–752 form the GGDEF domain; that stretch reads KYYAILVMDG…GKDTLAIGLL (161 aa). The Mn(2+) site is built by Asp600, Glu656, Asp673, Asp674, Glu694, and Glu700.

The protein belongs to the CRISPR system Cmr2 family. In terms of assembly, part of the type III-B Cmr ribonucleoprotein (RNP) complex, an elongated RNP with Cmr2 and Cmr3 as the base, with Cmr4 and Cmr5 forming a helical core along the mature crRNA (39 or 45 nt in length), while the complex is capped by Cmr6 and Cmr1. The 5' end of the crRNA is bound to Cmr2 and Cmr3, while Cmr6 and a Cmr1 subunit (Cmr1-1 or Cmr1-2) cap the 3' end of the crRNA. The target RNA lies antiparallel to the crRNA, with its 5' end near Cmr1 and Cmr6 and its 3' end near Cmr2 and Cmr3; major target cleavage occurs nears the junction of Cmr1/Cmr6 and Cmr4/Cmr, with minor cleavage occurring at 6 nt intervals which coincide with the proposed spacing of Cmr4 subunits. Forms a 1:1 complex with Cmr3. The Cmr2-Cmr3 complex non-specifically binds ss-target RNA and crRNA. Interacts with Cmr3, Cmr4 and Cmr5. It depends on Ca(2+) as a cofactor. Mn(2+) is required as a cofactor. The cofactor is Zn(2+).

Its subcellular location is the cytoplasm. Its function is as follows. CRISPR (clustered regularly interspaced short palindromic repeat), is an adaptive immune system that provides protection against mobile genetic elements (viruses, transposable elements and conjugative plasmids). CRISPR clusters contain sequences complementary to antecedent mobile elements and target invading nucleic acids. CRISPR clusters are transcribed and processed into CRISPR RNA (crRNA), formerly called psiRNA (prokaryotic silencing) in this organism. Part of the Cmr ribonucleoprotein complex which has divalent cation-dependent endoribonuclease activity specific for ssRNA complementary to the crRNA (target RNA), generating 5' hydroxy- and 3' phosphate or 2'-3' cyclic phosphate termini. Cmr4 is probably the subunit that cleaves target RNA. Cmr complex does not cleave ssDNA complementary to the crRNA. Cleavage of target RNA is guided by the crRNA; substrate cleavage occurs a fixed distance (14 nt) from the 3' end of the crRNA. In vitro reconstitution shows Cmr1-2 and Cmr5 are not absolutely necessary for target cleavage. This is CRISPR system Cmr subunit Cmr2 from Pyrococcus furiosus (strain ATCC 43587 / DSM 3638 / JCM 8422 / Vc1).